Consider the following 548-residue polypeptide: Chaperonin GroEL 2 (548 aa).

ATP is bound by residues T30–P33, K51, D87–T91, G415, N479–A481, and D495. Positions A524–F548 are disordered. Residues P537–F548 are compositionally biased toward gly residues.

This sequence belongs to the chaperonin (HSP60) family. Forms a cylinder of 14 subunits composed of two heptameric rings stacked back-to-back. Interacts with the co-chaperonin GroES.

It localises to the cytoplasm. It carries out the reaction ATP + H2O + a folded polypeptide = ADP + phosphate + an unfolded polypeptide.. Together with its co-chaperonin GroES, plays an essential role in assisting protein folding. The GroEL-GroES system forms a nano-cage that allows encapsulation of the non-native substrate proteins and provides a physical environment optimized to promote and accelerate protein folding. The protein is Chaperonin GroEL 2 of Burkholderia pseudomallei (strain 668).